The primary structure comprises 274 residues: Formamidopyrimidine-DNA glycosylase (274 aa).

Catalysis depends on proline 2, which acts as the Schiff-base intermediate with DNA. The active-site Proton donor is the glutamate 3. The active-site Proton donor; for beta-elimination activity is the lysine 58. DNA contacts are provided by histidine 92 and arginine 111. The FPG-type; degenerate zinc finger occupies 239 to 273 (HVYGREGEPCERCGTIIEKIKVAQRGTHFCPLEQR). Residue arginine 263 is the Proton donor; for delta-elimination activity of the active site.

This sequence belongs to the FPG family. As to quaternary structure, monomer. Requires Zn(2+) as cofactor.

The enzyme catalyses Hydrolysis of DNA containing ring-opened 7-methylguanine residues, releasing 2,6-diamino-4-hydroxy-5-(N-methyl)formamidopyrimidine.. The catalysed reaction is 2'-deoxyribonucleotide-(2'-deoxyribose 5'-phosphate)-2'-deoxyribonucleotide-DNA = a 3'-end 2'-deoxyribonucleotide-(2,3-dehydro-2,3-deoxyribose 5'-phosphate)-DNA + a 5'-end 5'-phospho-2'-deoxyribonucleoside-DNA + H(+). Involved in base excision repair of DNA damaged by oxidation or by mutagenic agents. Acts as a DNA glycosylase that recognizes and removes damaged bases. Has a preference for oxidized purines, such as 7,8-dihydro-8-oxoguanine (8-oxoG). Has AP (apurinic/apyrimidinic) lyase activity and introduces nicks in the DNA strand. Cleaves the DNA backbone by beta-delta elimination to generate a single-strand break at the site of the removed base with both 3'- and 5'-phosphates. This chain is Formamidopyrimidine-DNA glycosylase, found in Lactiplantibacillus plantarum (strain ATCC BAA-793 / NCIMB 8826 / WCFS1) (Lactobacillus plantarum).